The chain runs to 278 residues: Checkpoint protein Hus1-like (278 aa).

This sequence belongs to the HUS1 family. Component of the 9-1-1 checkpoint clamp complex consisting of Rad9 isoform A, Rad1 and Hus1-like; the interactions with Rad1 and Rad9 are direct. This complex probably also forms with Rad9 isoform B, however 9-1-1 complex containing Rad9 isoform A localizes to the nuclear periphery. In terms of tissue distribution, expressed in ovary.

It is found in the cytoplasm. Its subcellular location is the nucleus envelope. In terms of biological role, component of the 9-1-1 checkpoint clamp complex. Involved in both meiotic and somatic DNA damage responses. Essential for activation of the meiotic checkpoint in response to double-strand DNA breaks; required for the S-phase checkpoint but not the G2-M phase checkpoint. Involved in double strand break repair by homologous recombination during meiosis; influences the organization of chromosomal DNA in the meiotic nucleus. In Drosophila melanogaster (Fruit fly), this protein is Checkpoint protein Hus1-like.